Reading from the N-terminus, the 502-residue chain is Bone morphogenetic protein receptor type-1B (502 aa).

The segment covering 1–10 has biased composition (polar residues); the sequence is MPLLSSSKLS. The signal sequence occupies residues 1 to 13; it reads MPLLSSSKLSMES. The tract at residues 1–27 is disordered; the sequence is MPLLSSSKLSMESRKEDSEGTAPAPPQ. Topologically, residues 14 to 126 are extracellular; it reads RKEDSEGTAP…DFAEGNIHHK (113 aa). Disulfide bonds link Cys-32-Cys-53, Cys-34-Cys-38, Cys-47-Cys-71, Cys-81-Cys-95, and Cys-96-Cys-102. Residue Asn-44 is glycosylated (N-linked (GlcNAc...) asparagine). The helical transmembrane segment at 127–148 threads the bilayer; sequence ALLISVTVCSILLVLIIIFCYF. The Cytoplasmic portion of the chain corresponds to 149–502; the sequence is RYKRQEARPR…KMSESQDIKL (354 aa). Residues 174–203 form the GS domain; sequence ESLKDLIEQSQSSGSGSGLPLLVQRTIAKQ. In terms of domain architecture, Protein kinase spans 204–494; sequence IQMVKQIGKG…LRVKKTLAKM (291 aa). ATP contacts are provided by residues 210–218 and Lys-231; that span reads IGKGRYGEV. Asp-332 serves as the catalytic Proton acceptor.

Belongs to the protein kinase superfamily. TKL Ser/Thr protein kinase family. TGFB receptor subfamily. Mg(2+) serves as cofactor. Requires Mn(2+) as cofactor. In terms of processing, autophosphorylated.

It is found in the cell membrane. It catalyses the reaction L-threonyl-[receptor-protein] + ATP = O-phospho-L-threonyl-[receptor-protein] + ADP + H(+). The enzyme catalyses L-seryl-[receptor-protein] + ATP = O-phospho-L-seryl-[receptor-protein] + ADP + H(+). Its function is as follows. On ligand binding, forms a receptor complex consisting of two type II and two type I transmembrane serine/threonine kinases. Type II receptors phosphorylate and activate type I receptors which autophosphorylate, then bind and activate SMAD transcription. Positively regulates chondrocyte differentiation. This is Bone morphogenetic protein receptor type-1B (BMPR1B) from Gallus gallus (Chicken).